The following is a 302-amino-acid chain: Recombination-associated protein RdgC (302 aa).

This sequence belongs to the RdgC family.

Its subcellular location is the cytoplasm. The protein localises to the nucleoid. May be involved in recombination. This chain is Recombination-associated protein RdgC, found in Haemophilus influenzae (strain PittGG).